We begin with the raw amino-acid sequence, 365 residues long: Phosphatidylcholine:ceramide cholinephosphotransferase 2 (365 aa).

Positions 9 to 50 are disordered; the sequence is LEGHLESQTNNSTNTYTSPTEAVEEEDKNGKGKPKTLSNGLR. Residues 15-28 are compositionally biased toward low complexity; it reads SQTNNSTNTYTSPT. The next 5 membrane-spanning stretches (helical) occupy residues 80–100, 128–148, 159–179, 219–239, and 248–268; these read GIAF…ITVV, FSVS…QWLF, FFFI…VTTL, ILCG…TYLF, and FWWY…CILV. Histidine 229 is a catalytic residue. Catalysis depends on residues histidine 272 and aspartate 276. Residues 273 to 290 form a helical membrane-spanning segment; the sequence is YTVDVIIAYYITTRLFWW. The Cytoplasmic portion of the chain corresponds to 291-365; it reads YHSMANEKNL…KIGEDNEKST (75 aa). S-palmitoyl cysteine attachment occurs at residues cysteine 331, cysteine 332, cysteine 343, and cysteine 348.

It belongs to the sphingomyelin synthase family. In terms of processing, palmitoylated on Cys-331, Cys-332, Cys-343 and Cys-348; which plays an important role in plasma membrane localization. In terms of tissue distribution, expression restricted to late round spermatids and elongating spermatids but not detected in late elongate spermatids and Sertoli cells (at protein level).

The protein resides in the cell membrane. It is found in the golgi apparatus membrane. It carries out the reaction an N-acylsphing-4-enine + a 1,2-diacyl-sn-glycero-3-phosphocholine = a sphingomyelin + a 1,2-diacyl-sn-glycerol. The enzyme catalyses an N-acylsphinganine + a 1,2-diacyl-sn-glycero-3-phosphocholine = an N-acylsphinganine-1-phosphocholine + a 1,2-diacyl-sn-glycerol. It catalyses the reaction an N-acyl-(4R)-4-hydroxysphinganine + a 1,2-diacyl-sn-glycero-3-phosphocholine = an N-acyl-(4R)-4-hydroxysphinganine-phosphocholine + a 1,2-diacyl-sn-glycerol. The catalysed reaction is an N-acylsphing-4-enine + a 1,2-diacyl-sn-glycero-3-phosphoethanolamine = an N-acylsphing-4-enine 1-phosphoethanolamine + a 1,2-diacyl-sn-glycerol. It carries out the reaction an N-acylsphinganine + a 1,2-diacyl-sn-glycero-3-phosphoethanolamine = an N-acylsphinganine-1-phosphoethanolamine + a 1,2-diacyl-sn-glycerol. The enzyme catalyses an N-acyl-(4R)-4-hydroxysphinganine + a 1,2-diacyl-sn-glycero-3-phosphoethanolamine = an N-acyl-(4R)-4-hydroxysphinganine-1-phosphoethanolamine + a 1,2-diacyl-sn-glycerol. It catalyses the reaction 1,2-dihexadecanoyl-sn-glycero-3-phosphocholine + an N-acylsphing-4-enine = 1,2-dihexadecanoyl-sn-glycerol + a sphingomyelin. The catalysed reaction is 1-(9Z-octadecenoyl)-2-acyl-sn-3-glycerol + a sphingomyelin = a 1-(9Z-octadecenoyl)-2-acyl-sn-glycero-3-phosphocholine + an N-acylsphing-4-enine. It carries out the reaction N-hexadecanoylsphinganine + a 1,2-diacyl-sn-glycero-3-phosphocholine = N-hexadecanoyl-sphinganine-1-phosphocholine + a 1,2-diacyl-sn-glycerol. The enzyme catalyses N-hexadecanoyl-(4R)-hydroxysphinganine + a 1,2-diacyl-sn-glycero-3-phosphocholine = N-hexadecanoyl-(4R)-hydroxysphinganine-phosphocholine + a 1,2-diacyl-sn-glycerol. It catalyses the reaction N-hexadecanoylsphinganine + a 1,2-diacyl-sn-glycero-3-phosphoethanolamine = N-hexadecanoyl-sphinganine-1-phosphoethanolamine + a 1,2-diacyl-sn-glycerol. The catalysed reaction is N-hexadecanoyl-(4R)-hydroxysphinganine + a 1,2-diacyl-sn-glycero-3-phosphoethanolamine = N-hexadecanoyl-(4R)-hydroxysphinganine-1-phosphoethanolamine + a 1,2-diacyl-sn-glycerol. The protein operates within sphingolipid metabolism. In terms of biological role, sphingomyelin synthase that primarily contributes to sphingomyelin synthesis and homeostasis at the plasma membrane. Catalyzes the reversible transfer of phosphocholine moiety in sphingomyelin biosynthesis: in the forward reaction transfers phosphocholine head group of phosphatidylcholine (PC) on to ceramide (CER) to form ceramide phosphocholine (sphingomyelin, SM) and diacylglycerol (DAG) as by-product, and in the reverse reaction transfers phosphocholine from SM to DAG to form PC and CER. The direction of the reaction appears to depend on the levels of CER and DAG in the plasma membrane. Does not use free phosphorylcholine or CDP-choline as donors. Can also transfer phosphoethanolamine head group of phosphatidylethanolamine (PE) on to ceramide (CER) to form ceramide phosphoethanolamine (CPE). Regulates receptor-mediated signal transduction via mitogenic DAG and proapoptotic CER, as well as via SM, a structural component of membrane rafts that serve as platforms for signal transduction and protein sorting. To a lesser extent, plays a role in secretory transport via regulation of DAG pool at the Golgi apparatus and its downstream effects on PRKD1. Required for normal bone matrix mineralization. In Rattus norvegicus (Rat), this protein is Phosphatidylcholine:ceramide cholinephosphotransferase 2 (Sgms2).